The primary structure comprises 534 residues: Chaperonin GroEL 3 (534 aa).

ATP-binding positions include Thr-31–Pro-34, Gly-416, Asn-479–Leu-481, and Asp-495.

The protein belongs to the chaperonin (HSP60) family. Forms a cylinder of 14 subunits composed of two heptameric rings stacked back-to-back. Interacts with the co-chaperonin GroES.

It localises to the cytoplasm. It catalyses the reaction ATP + H2O + a folded polypeptide = ADP + phosphate + an unfolded polypeptide.. Its function is as follows. Together with its co-chaperonin GroES, plays an essential role in assisting protein folding. The GroEL-GroES system forms a nano-cage that allows encapsulation of the non-native substrate proteins and provides a physical environment optimized to promote and accelerate protein folding. This chain is Chaperonin GroEL 3, found in Protochlamydia amoebophila (strain UWE25).